The following is a 209-amino-acid chain: Protein-L-isoaspartate O-methyltransferase (209 aa).

The active site involves serine 60.

It belongs to the methyltransferase superfamily. L-isoaspartyl/D-aspartyl protein methyltransferase family.

It localises to the cytoplasm. The enzyme catalyses [protein]-L-isoaspartate + S-adenosyl-L-methionine = [protein]-L-isoaspartate alpha-methyl ester + S-adenosyl-L-homocysteine. In terms of biological role, catalyzes the methyl esterification of L-isoaspartyl residues in peptides and proteins that result from spontaneous decomposition of normal L-aspartyl and L-asparaginyl residues. It plays a role in the repair and/or degradation of damaged proteins. The polypeptide is Protein-L-isoaspartate O-methyltransferase (Methanococcus vannielii (strain ATCC 35089 / DSM 1224 / JCM 13029 / OCM 148 / SB)).